Consider the following 358-residue polypeptide: CRS2-associated factor 2, mitochondrial (358 aa).

The transit peptide at 1–28 (MLSIRRSLTLAKEPKDLFLFLCNLRARC) directs the protein to the mitochondrion. The segment at 35–64 (DPPFSPLSKPTKPPKEKKKQKTKKQDQSSE) is disordered. CRM domains are found at residues 141–239 (ETLT…SRPI) and 261–357 (DGLE…ELVT).

As to quaternary structure, part of large ribonucleo-protein complexes that include group IIB introns.

It localises to the mitochondrion. In terms of biological role, may be involved in the splicing of group IIB introns in mitochondria. The polypeptide is CRS2-associated factor 2, mitochondrial (Arabidopsis thaliana (Mouse-ear cress)).